Reading from the N-terminus, the 135-residue chain is Fluoride-specific ion channel FluC 1 (135 aa).

4 helical membrane-spanning segments follow: residues 7–27 (LAVG…GLVL), 32–52 (GFPY…PFLM), 65–85 (LALA…SFSV), and 96–116 (WSAF…LSLL). Residues Gly-75 and Thr-78 each coordinate Na(+).

The protein belongs to the fluoride channel Fluc/FEX (TC 1.A.43) family.

It localises to the cell membrane. It carries out the reaction fluoride(in) = fluoride(out). With respect to regulation, na(+) is not transported, but it plays an essential structural role and its presence is essential for fluoride channel function. In terms of biological role, fluoride-specific ion channel. Important for reducing fluoride concentration in the cell, thus reducing its toxicity. This is Fluoride-specific ion channel FluC 1 from Latilactobacillus sakei subsp. sakei (strain 23K) (Lactobacillus sakei subsp. sakei).